Reading from the N-terminus, the 361-residue chain is Spermatogenesis-associated protein 17 (361 aa).

IQ domains follow at residues 32 to 61, 55 to 84, and 91 to 120; these read ENDAAVKIQSWFRGCQVRAYVRHLNRIVTI, LNRIVTIIQKWWRSFLGRKQYQLTVQVAYY, and YNAMAVRKQRRWRGYRVRKYLFNYYYLKEY.

Its subcellular location is the cytoplasm. This Macaca fascicularis (Crab-eating macaque) protein is Spermatogenesis-associated protein 17 (SPATA17).